A 365-amino-acid polypeptide reads, in one-letter code: tRNA N6-adenosine threonylcarbamoyltransferase (365 aa).

Fe cation is bound by residues His119 and His123. Substrate-binding positions include Leu141–Gly145, Asp174, Gly187, and Asn288. Residue Asp316 participates in Fe cation binding.

This sequence belongs to the KAE1 / TsaD family. Fe(2+) is required as a cofactor.

The protein localises to the cytoplasm. The enzyme catalyses L-threonylcarbamoyladenylate + adenosine(37) in tRNA = N(6)-L-threonylcarbamoyladenosine(37) in tRNA + AMP + H(+). Its function is as follows. Required for the formation of a threonylcarbamoyl group on adenosine at position 37 (t(6)A37) in tRNAs that read codons beginning with adenine. Is involved in the transfer of the threonylcarbamoyl moiety of threonylcarbamoyl-AMP (TC-AMP) to the N6 group of A37, together with TsaE and TsaB. TsaD likely plays a direct catalytic role in this reaction. This is tRNA N6-adenosine threonylcarbamoyltransferase from Rhizobium etli (strain ATCC 51251 / DSM 11541 / JCM 21823 / NBRC 15573 / CFN 42).